Reading from the N-terminus, the 469-residue chain is 3-isopropylmalate dehydratase large subunit (469 aa).

[4Fe-4S] cluster-binding residues include Cys-349, Cys-409, and Cys-412.

This sequence belongs to the aconitase/IPM isomerase family. LeuC type 1 subfamily. As to quaternary structure, heterodimer of LeuC and LeuD. [4Fe-4S] cluster is required as a cofactor.

It catalyses the reaction (2R,3S)-3-isopropylmalate = (2S)-2-isopropylmalate. The protein operates within amino-acid biosynthesis; L-leucine biosynthesis; L-leucine from 3-methyl-2-oxobutanoate: step 2/4. Catalyzes the isomerization between 2-isopropylmalate and 3-isopropylmalate, via the formation of 2-isopropylmaleate. This chain is 3-isopropylmalate dehydratase large subunit, found in Methylorubrum populi (strain ATCC BAA-705 / NCIMB 13946 / BJ001) (Methylobacterium populi).